Here is a 120-residue protein sequence, read N- to C-terminus: Superoxide dismutase [Cu-Zn] (120 aa).

Residues His11, His13, and His28 each contribute to the Cu cation site. Positions 16–52 (GDTTNGCMSTGPHFNPTGKEHGAPQDENRHAGDLGNI) are disordered. Cys22 and Cys112 are oxidised to a cystine. His28, His36, His45, and Asp48 together coordinate Zn(2+). Over residues 33 to 47 (GKEHGAPQDENRHAG) the composition is skewed to basic and acidic residues. Residue His85 participates in Cu cation binding.

It belongs to the Cu-Zn superoxide dismutase family. In terms of assembly, homodimer. Requires Cu cation as cofactor. It depends on Zn(2+) as a cofactor.

It is found in the cytoplasm. It catalyses the reaction 2 superoxide + 2 H(+) = H2O2 + O2. Its function is as follows. Destroys radicals which are normally produced within the cells and which are toxic to biological systems. This is Superoxide dismutase [Cu-Zn] (sodC) from Aspergillus japonicus.